The sequence spans 251 residues: tRNA1(Val) (adenine(37)-N6)-methyltransferase (251 aa).

The protein belongs to the methyltransferase superfamily. tRNA (adenine-N(6)-)-methyltransferase family.

The protein resides in the cytoplasm. It catalyses the reaction adenosine(37) in tRNA1(Val) + S-adenosyl-L-methionine = N(6)-methyladenosine(37) in tRNA1(Val) + S-adenosyl-L-homocysteine + H(+). In terms of biological role, specifically methylates the adenine in position 37 of tRNA(1)(Val) (anticodon cmo5UAC). This chain is tRNA1(Val) (adenine(37)-N6)-methyltransferase, found in Yersinia enterocolitica serotype O:8 / biotype 1B (strain NCTC 13174 / 8081).